Consider the following 252-residue polypeptide: Oil body-associated protein 2A (252 aa).

A disordered region spans residues 1–31 (MASSDGKPLPTPASVGGGGGSSTAPPGQPTT). Residues 22 to 31 (STAPPGQPTT) are compositionally biased toward low complexity.

Belongs to the OBAP family.

This chain is Oil body-associated protein 2A, found in Zea mays (Maize).